We begin with the raw amino-acid sequence, 462 residues long: Argininosuccinate lyase (462 aa).

The protein belongs to the lyase 1 family. Argininosuccinate lyase subfamily.

It is found in the cytoplasm. The enzyme catalyses 2-(N(omega)-L-arginino)succinate = fumarate + L-arginine. It functions in the pathway amino-acid biosynthesis; L-arginine biosynthesis; L-arginine from L-ornithine and carbamoyl phosphate: step 3/3. This Xanthobacter autotrophicus (strain ATCC BAA-1158 / Py2) protein is Argininosuccinate lyase.